A 418-amino-acid chain; its full sequence is Protein-lysine 6-oxidase (418 aa).

An N-terminal signal peptide occupies residues 1–20 (MRFAWTALLGSLQLCALVRC). Residues 21–169 (APPAASHRQP…NRVEVDGMVG (149 aa)) constitute a propeptide, removed by BMP1. Residues 63–84 (YQPQRRRDPGATAPGAANATAP) form a disordered region. Positions 72–84 (GATAPGAANATAP) are enriched in low complexity. 3 N-linked (GlcNAc...) asparagine glycosylation sites follow: Asn80, Asn96, and Asn143. A disordered region spans residues 130 to 175 (TSGAHDAGTSRADNQTAPGEVPTLSNLRPPNRVEVDGMVGDDPYNP). A compositionally biased stretch (polar residues) spans 140 to 157 (RADNQTAPGEVPTLSNLR). At Tyr188 the chain carries Sulfotyrosine. The interval 214–418 (PDLVPDPYYI…YASGCTISPY (205 aa)) is lysyl-oxidase like. 5 cysteine pairs are disulfide-bonded: Cys239/Cys245, Cys292/Cys341, Cys325/Cys331, Cys352/Cys362, and Cys399/Cys413. Cu cation-binding residues include His293, His295, and His297. The lysine tyrosylquinone (Lys-Tyr) cross-link spans 321 to 356 (KASFCLEDTSCDYGYHRRFACTAHTQGLSPGCYDTY). Tyr356 carries the 2',4',5'-topaquinone modification.

The protein belongs to the lysyl oxidase family. Interacts with MFAP4. Interacts (via propeptide) with EFEMP2; this interaction is strong and facilitates formation of ternary complexes with ELN during elastic fiber assembly; this interaction limits interaction of EFEMP2 with FBLN5. Cu cation is required as a cofactor. Requires lysine tyrosylquinone residue as cofactor. In terms of processing, the lysine tyrosylquinone cross-link (LTQ) is generated by condensation of the epsilon-amino group of a lysine with a topaquinone produced by oxidation of tyrosine. Proteolytically cleaved by BMP1 which removes the propeptide. Also proteolytically cleaved by ADAMTS2 and ADAMTS14, but not by ADAMTS3, at an additional cleavage site downstream of the BMP1 cleavage site. The propeptide plays a role in directing the deposition of this enzyme to elastic fibers, via interaction with tropoelastin. Cleavage by BMP1 to remove the propeptide does not increase enzymatic activity but increases binding to collagen. Cleavage by ADAMTS2 produces a form with reduced collagen-binding activity. Post-translationally, sulfated at Tyr-188 and also at either Tyr-184 or Tyr-185 which enhances binding to collagen.

Its subcellular location is the secreted. It is found in the extracellular space. The enzyme catalyses L-lysyl-[protein] + O2 + H2O = (S)-2-amino-6-oxohexanoyl-[protein] + H2O2 + NH4(+). Functionally, responsible for the post-translational oxidative deamination of peptidyl lysine residues in precursors to fibrous collagen and elastin. Regulator of Ras expression. May play a role in tumor suppression. Plays a role in the aortic wall architecture. The protein is Protein-lysine 6-oxidase of Bos taurus (Bovine).